A 63-amino-acid polypeptide reads, in one-letter code: Small ribosomal subunit protein bS21 (63 aa).

This sequence belongs to the bacterial ribosomal protein bS21 family.

In Azobacteroides pseudotrichonymphae genomovar. CFP2, this protein is Small ribosomal subunit protein bS21.